A 134-amino-acid polypeptide reads, in one-letter code: Transcription antitermination protein NusB (134 aa).

It belongs to the NusB family.

Functionally, involved in transcription antitermination. Required for transcription of ribosomal RNA (rRNA) genes. Binds specifically to the boxA antiterminator sequence of the ribosomal RNA (rrn) operons. The protein is Transcription antitermination protein NusB of Shewanella baltica (strain OS223).